We begin with the raw amino-acid sequence, 150 residues long: FCS-Like Zinc finger 15 (150 aa).

Positions asparagine 12 to asparagine 28 are enriched in low complexity. Residues asparagine 12–serine 31 form a disordered region. The FLZ-type zinc-finger motif lies at glycine 67 to serine 111. Positions serine 129–tyrosine 150 are disordered.

The protein belongs to the FLZ family. Interacts with KIN10 and KIN11 via its FLZ-type zinc finger domain. Interacts with KINB1 and KINB3 via its N-terminal part. Forms homodimer and heterodimer with FLZ1, FLZ2 and FLZ7 in vitro.

The protein localises to the cytoplasm. The protein resides in the P-body. In terms of biological role, may act as an adapter to facilitate the interaction of SnRK1 complex with effector proteins, conferring tissue- and stimulus-type specific differences in the SnRK1 regulation pathway. This Arabidopsis thaliana (Mouse-ear cress) protein is FCS-Like Zinc finger 15.